Reading from the N-terminus, the 179-residue chain is Replication restart protein DnaT (179 aa).

Polar residues predominate over residues Ser-151–Glu-168. Positions Ser-151–Gly-179 are disordered.

Belongs to the DnaT family. As to quaternary structure, homooligomerizes. Interacts with PriB. Component of the replication restart primosome. Primosome assembly occurs via a 'hand-off' mechanism. PriA binds to replication forks, subsequently PriB then DnaT bind; DnaT then displaces ssDNA to generate the helicase loading substrate.

Its function is as follows. Involved in the restart of stalled replication forks, which reloads the replicative helicase on sites other than the origin of replication. Can function in multiple replication restart pathways. Displaces ssDNA from a PriB-ssDNA complex. Probably forms a spiral filament on ssDNA. This Salmonella heidelberg (strain SL476) protein is Replication restart protein DnaT.